We begin with the raw amino-acid sequence, 137 residues long: Large ribosomal subunit protein uL13 (137 aa).

The protein belongs to the universal ribosomal protein uL13 family. Part of the 50S ribosomal subunit.

This protein is one of the early assembly proteins of the 50S ribosomal subunit, although it is not seen to bind rRNA by itself. It is important during the early stages of 50S assembly. This Methanocaldococcus jannaschii (strain ATCC 43067 / DSM 2661 / JAL-1 / JCM 10045 / NBRC 100440) (Methanococcus jannaschii) protein is Large ribosomal subunit protein uL13.